A 459-amino-acid chain; its full sequence is MLKLIAPTIMLLPLTWLSKKHMIWINTTTHSLIISIIPLLFFNQINNNLFSYSLSFSSDPLTTPLLMLTTWLLPLTIMASQRHLSNEPLSRKKLYLSMLISLQISLIMTFTATELIMFYIFFEATLIPTLVIITRWGNQPERLNAGTYFLFYTLVGSLPLLIALIHTHNTLGSLNILLLTLTAQELPNSWANNLMWLAYTMAFMVKMPLYGLHLWLPKAHVEAPIAGSMMLAAVLLKLGGYGMMRLMLILNPLTKHMAYPFLALSLWGMIMTSSISLRQTDLKSLIAYSSISHMALVVAAILIQTPWSFTGAVVLMIAHGLTSSLLFCLANSNYERTHSRIMILSQGLQTLLPLMALWWLLASLANLALPPTINLLGELSVLVTTFSWSNTTLLLTGSNMLITALYSLYMFTTTQWGPLTHHITNMKPSFTRENILMFMHLSPILLLSLNPDIITGFTS.

13 helical membrane passes run 22–42 (MIWINTTTHSLIISIIPLLFF), 60–80 (PLTTPLLMLTTWLLPLTIMAS), 94–112 (LYLSMLISLQISLIMTFTA), 113–133 (TELIMFYIFFEATLIPTLVII), 145–165 (AGTYFLFYTLVGSLPLLIALI), 196–216 (WLAYTMAFMVKMPLYGLHLWL), 224–244 (PIAGSMMLAAVLLKLGGYGMM), 257–277 (MAYPFLALSLWGMIMTSSISL), 284–303 (SLIAYSSISHMALVVAAILI), 308–330 (SFTGAVVLMIAHGLTSSLLFCLA), 351–371 (LLPLMALWWLLASLANLALPP), 391–411 (TTLLLTGSNMLITALYSLYMF), and 435–455 (ILMFMHLSPILLLSLNPDIIT).

The protein belongs to the complex I subunit 4 family. As to quaternary structure, core subunit of respiratory chain NADH dehydrogenase (Complex I) which is composed of 45 different subunits.

The protein resides in the mitochondrion inner membrane. It catalyses the reaction a ubiquinone + NADH + 5 H(+)(in) = a ubiquinol + NAD(+) + 4 H(+)(out). In terms of biological role, core subunit of the mitochondrial membrane respiratory chain NADH dehydrogenase (Complex I) which catalyzes electron transfer from NADH through the respiratory chain, using ubiquinone as an electron acceptor. Essential for the catalytic activity and assembly of complex I. The sequence is that of NADH-ubiquinone oxidoreductase chain 4 (MT-ND4) from Gorilla gorilla gorilla (Western lowland gorilla).